The primary structure comprises 1631 residues: ALK tyrosine kinase receptor (1631 aa).

A signal peptide spans 1–18 (MGSVGLLGLLLLRLSVTA). Over 19–1053 (SGSGAGTGSG…PHLPLSLVLS (1035 aa)) the chain is Extracellular. A disordered region spans residues 20–53 (GSGAGTGSGTGSGTGTGTGQLVGSPATGPALQPR). Positions 21–39 (SGAGTGSGTGSGTGTGTGQ) are enriched in gly residues. A heparin-binding region region spans residues 60–82 (RLQRKSLAVDFVVPSLFRVYARD). Residues asparagine 185, asparagine 260, asparagine 301, asparagine 340, asparagine 427, asparagine 440, asparagine 461, asparagine 579, asparagine 587, and asparagine 643 are each glycosylated (N-linked (GlcNAc...) asparagine). The MAM 1 domain occupies 280-443 (LECSFDFPCE…DFFALKNCSE (164 aa)). One can recognise an MAM 2 domain in the interval 494 to 652 (FYCNFENGFC…NISISLDCYL (159 aa)). Cysteine 703 and cysteine 716 are joined by a disulfide. Asparagine 724 is a glycosylation site (N-linked (GlcNAc...) asparagine). Cysteine 798 and cysteine 809 are disulfide-bonded. Residues asparagine 823, asparagine 878, asparagine 879, and asparagine 901 are each glycosylated (N-linked (GlcNAc...) asparagine). A disulfide bridge connects residues cysteine 921 and cysteine 943. An N-linked (GlcNAc...) asparagine glycan is attached at asparagine 1001. 3 cysteine pairs are disulfide-bonded: cysteine 1002/cysteine 1010, cysteine 1005/cysteine 1021, and cysteine 1023/cysteine 1036. The interval 1002–1040 (CSHCEGDECHMDPESHKVICFCDHGTVLAEDGVSCIVSP) is EGF-like. The helical transmembrane segment at 1054–1074 (VVTSALVAALVLAFSGIMIVY) threads the bilayer. At 1075–1631 (RRKHQELQAM…DALLKTPPGP (557 aa)) the chain is on the cytoplasmic side. The region spanning 1131–1407 (ITLIRGLGHG…IEYCTQDPDV (277 aa)) is the Protein kinase domain. ATP contacts are provided by residues 1137–1145 (LGHGAFGEV) and lysine 1165. The active-site Proton acceptor is the aspartate 1264. Disordered stretches follow at residues 1423–1493 (EEKV…GHVN), 1526–1554 (WFTE…REGS), and 1609–1631 (FEGT…PPGP).

As to quaternary structure, homodimer; homodimerizes following heparin- and ligand-binding. Interacts with CBL, IRS1, PIK3R1 and PLCG1. Interacts with FRS2 and SHC1. Interacts with PTN and MDK. In terms of processing, phosphorylated at tyrosine residues by autocatalysis, which activates kinase activity. In cells not stimulated by a ligand, receptor protein tyrosine phosphatase beta and zeta complex (PTPRB/PTPRZ1) dephosphorylates ALK at the sites in ALK that are undergoing autophosphorylation through autoactivation.

It localises to the cell membrane. It carries out the reaction L-tyrosyl-[protein] + ATP = O-phospho-L-tyrosyl-[protein] + ADP + H(+). With respect to regulation, activated upon ALKAL2 ligand-binding. ALKAL2-driven activation is coupled with heparin-binding. Following ligand-binding, homodimerizes and autophosphorylates, activating its kinase activity. Inactivated through dephosphorylation by receptor protein tyrosine phosphatase beta and zeta complex (PTPRB/PTPRZ1) when there is no stimulation by a ligand. Functionally, neuronal receptor tyrosine kinase that is essentially and transiently expressed in specific regions of the central and peripheral nervous systems and plays an important role in the genesis and differentiation of the nervous system. Also acts as a key thinness protein involved in the resistance to weight gain: in hypothalamic neurons, controls energy expenditure acting as a negative regulator of white adipose tissue lipolysis and sympathetic tone to fine-tune energy homeostasis. Following activation by ALKAL2 ligand at the cell surface, transduces an extracellular signal into an intracellular response. In contrast, ALKAL1 is not a potent physiological ligand for ALK. Ligand-binding to the extracellular domain induces tyrosine kinase activation, leading to activation of the mitogen-activated protein kinase (MAPK) pathway. Phosphorylates almost exclusively at the first tyrosine of the Y-x-x-x-Y-Y motif. Induces tyrosine phosphorylation of CBL, FRS2, IRS1 and SHC1, as well as of the MAP kinases MAPK1/ERK2 and MAPK3/ERK1. ALK activation may also be regulated by pleiotrophin (PTN) and midkine (MDK). PTN-binding induces MAPK pathway activation, which is important for the anti-apoptotic signaling of PTN and regulation of cell proliferation. MDK-binding induces phosphorylation of the ALK target insulin receptor substrate (IRS1), activates mitogen-activated protein kinases (MAPKs) and PI3-kinase, resulting also in cell proliferation induction. Drives NF-kappa-B activation, probably through IRS1 and the activation of the AKT serine/threonine kinase. Recruitment of IRS1 to activated ALK and the activation of NF-kappa-B are essential for the autocrine growth and survival signaling of MDK. This is ALK tyrosine kinase receptor from Canis lupus familiaris (Dog).